A 281-amino-acid chain; its full sequence is Energy-coupling factor transporter ATP-binding protein EcfA1 (281 aa).

Residues 7–242 (ISVEDIVFRY…NKELVRIGLD (236 aa)) form the ABC transporter domain. 42–49 (GHNGSGKS) lines the ATP pocket. The Proton acceptor role is filled by Glu-168.

Belongs to the ABC transporter superfamily. Energy-coupling factor EcfA family. As to quaternary structure, forms a stable energy-coupling factor (ECF) transporter complex composed of 2 membrane-embedded substrate-binding proteins (S component), 2 ATP-binding proteins (A component) and 2 transmembrane proteins (T component).

Its subcellular location is the cell membrane. Functionally, ATP-binding (A) component of a common energy-coupling factor (ECF) ABC-transporter complex. Unlike classic ABC transporters this ECF transporter provides the energy necessary to transport a number of different substrates. The polypeptide is Energy-coupling factor transporter ATP-binding protein EcfA1 (Bacillus subtilis (strain 168)).